A 228-amino-acid polypeptide reads, in one-letter code: ATP synthase subunit a 2 (228 aa).

6 helical membrane-spanning segments follow: residues 16–36, 74–94, 103–123, 139–159, 173–193, and 194–214; these read VGTT…GAWL, VFPF…SSLI, DLSA…WFGI, SPFL…ALAV, LLVL…LHIV, and EALV…AGAI.

The protein belongs to the ATPase A chain family. As to quaternary structure, F-type ATPases have 2 components, CF(1) - the catalytic core - and CF(0) - the membrane proton channel. CF(1) has five subunits: alpha(3), beta(3), gamma(1), delta(1), epsilon(1). CF(0) has three main subunits: a(1), b(2) and c(9-12). The alpha and beta chains form an alternating ring which encloses part of the gamma chain. CF(1) is attached to CF(0) by a central stalk formed by the gamma and epsilon chains, while a peripheral stalk is formed by the delta and b chains.

It is found in the cell inner membrane. Key component of the proton channel; it plays a direct role in the translocation of protons across the membrane. This is ATP synthase subunit a 2 from Pelobacter propionicus (strain DSM 2379 / NBRC 103807 / OttBd1).